A 796-amino-acid polypeptide reads, in one-letter code: Histone-lysine N-methyltransferase PRDM9 (796 aa).

A disordered region spans residues 1–23 (MSRTMNTNKPEENSTEGDAGKLE). Residues 27 to 90 (KVKDEFKDIS…QRQAIKPQIN (64 aa)) enclose the KRAB-related domain. Residues 149–172 (SEHAQKPVCSPEEGNTSGQHFGKK) are disordered. 4 residues coordinate Zn(2+): C209, C212, C220, and H223. An SET domain is found at 248–362 (PGLRIGPSGI…PGRELLVWYG (115 aa)). Residues 260 to 262 (AGL), Y295, and 324 to 325 (NC) contribute to the S-adenosyl-L-methionine site. Position 292 to 298 (292 to 298 (NSGYSWL)) interacts with substrate. Y361 contacts substrate. Position 372 is an N6,N6,N6-trimethyllysine; alternate (K372). At K372 the chain carries N6-methyllysine; alternate. N6-methyllysine is present on residues K376 and K378. The C2H2-type 1 zinc finger occupies 392 to 415 (HPCFLCSLAFSSQKFLTQHVEWNH). The Zn(2+) site is built by C394, C397, H410, and H415. Over residues 443–457 (FDSQNKNDKASNEVK) the composition is skewed to basic and acidic residues. The disordered stretch occupies residues 443 to 497 (FDSQNKNDKASNEVKRKSKPRHKWTRQRISTAFSSTLKEQMRSEESKRTVEEELR). The span at 458 to 468 (RKSKPRHKWTR) shows a compositional bias: basic residues. Residues 469 to 480 (QRISTAFSSTLK) show a composition bias toward polar residues. Basic and acidic residues predominate over residues 481-497 (EQMRSEESKRTVEEELR). Residues 522-540 (QCGQCFSDKSNVSEHQRTH) form a C2H2-type 2; degenerate zinc finger. C2H2-type zinc fingers lie at residues 546-568 (YICRECGRGFSQKSDLIKHQRTH), 574-596 (YICRECGRGFTQKSDLIKHQRTH), 602-624 (YICRECGRGFTQKSDLIKHQRTH), 630-652 (YICRECGRGFTQKSDLIKHQRTH), 658-680 (YICRECGRGFTQKSSLIRHQRTH), 686-708 (YICRECGLGFTQKSNLIRHLRTH), 714-736 (YICRECGLGFTRKSNLIQHQRTH), 742-764 (YICRECGQGLTWKSSLIQHQRTH), and 770-792 (YICRECGRGFTWKSSLIQHQRTH). Zn(2+) contacts are provided by C716, C719, H732, H736, C744, C747, H760, H764, C772, C775, H788, and H792.

The protein belongs to the class V-like SAM-binding methyltransferase superfamily. In terms of assembly, homodimer. Interacts with EHMT2 and CDYL; interaction only takes place when PRDM9 is bound to hotspot DNA. Interacts with CXXC1; this interaction does not link PRDM9-activated recombination hotspot sites with DSB machinery and is not required for the hotspot recognition pathway. Forms a complex with EWSR1, REC8, SYCP3 and SYCP1; complex formation is dependent of phosphorylated form of REC8 and requires PRDM9 bound to hotspot DNA; EWSR1 joins PRDM9 with the chromosomal axis through REC8. Mono-methylated; automethylated. Tri-methylated; automethylated. Mono-methylation is predominant; automethylation is lower and slower than H3 peptide methylation and is in a highest S-adenosyl-L-methionine concentration-dependent. There are two major sites for automethylation at Lys-372 and Lys-378. Lysines can be simultaneously methylated, such as Lys-372(me3)/Lys-376(me1), Lys-372(me1)/Lys-378(me1) and Lys-372(me1)/Lys-376(me1)/Lys-378(me1). Automethylation is an intramolecular (cis) process.

It is found in the nucleus. Its subcellular location is the chromosome. The catalysed reaction is L-lysyl-[protein] + S-adenosyl-L-methionine = N(6)-methyl-L-lysyl-[protein] + S-adenosyl-L-homocysteine + H(+). The enzyme catalyses N(6)-methyl-L-lysyl-[protein] + S-adenosyl-L-methionine = N(6),N(6)-dimethyl-L-lysyl-[protein] + S-adenosyl-L-homocysteine + H(+). It carries out the reaction L-lysyl(4)-[histone H3] + 3 S-adenosyl-L-methionine = N(6),N(6),N(6)-trimethyl-L-lysyl(4)-[histone H3] + 3 S-adenosyl-L-homocysteine + 3 H(+). It catalyses the reaction L-lysyl(36)-[histone H3] + 3 S-adenosyl-L-methionine = N(6),N(6),N(6)-trimethyl-L-lysyl(36)-[histone H3] + 3 S-adenosyl-L-homocysteine + 3 H(+). The catalysed reaction is L-lysyl(9)-[histone H3] + 3 S-adenosyl-L-methionine = N(6),N(6),N(6)-trimethyl-L-lysyl(9)-[histone H3] + 3 S-adenosyl-L-homocysteine + 3 H(+). The enzyme catalyses L-lysyl(20)-[histone H4] + S-adenosyl-L-methionine = N(6)-methyl-L-lysyl(20)-[histone H4] + S-adenosyl-L-homocysteine + H(+). It carries out the reaction N(6)-methyl-L-lysyl(20)-[histone H4] + S-adenosyl-L-methionine = N(6),N(6)-dimethyl-L-lysyl(20)-[histone H4] + S-adenosyl-L-homocysteine + H(+). In terms of biological role, histone methyltransferase that sequentially mono-, di-, and tri-methylates both 'Lys-4' (H3K4) and 'Lys-36' (H3K36) of histone H3 to produce respectively trimethylated 'Lys-4' (H3K4me3) and trimethylated 'Lys-36' (H3K36me3) histone H3 and plays a key role in meiotic prophase by determining hotspot localization thereby promoting meiotic recombination. Can also methylate all four core histones with H3 being the best substrate and the most highly modified. Is also able, on one hand, to mono and di-methylate H4K20 and on other hand to trimethylate H3K9 with the di-methylated H3K9 as the best substrate. During meiotic prophase, binds specific DNA sequences through its zinc finger domains thereby determining hotspot localization where it promotes local H3K4me3 and H3K36me3 enrichment on the same nucleosomes through its histone methyltransferase activity. Thereby promotes double-stranded breaks (DSB) formation, at this subset of PRDM9-binding sites, that initiates meiotic recombination for the proper meiotic progression. During meiotic progression hotspot-bound PRDM9 interacts with several complexes; in early leptonema binds CDYL and EHMT2 followed by EWSR1 and CXXC1 by the end of leptonema. EWSR1 joins PRDM9 with the chromosomal axis through REC8. In this way, controls the DSB repair pathway, pairing of homologous chromosomes and sex body formation. Moreover plays a central role in the transcriptional activation of genes during early meiotic prophase thanks to H3K4me3 and H3K36me3 enrichment that represents a specific tag for epigenetic transcriptional activation. In addition performs automethylation. Acetylation and phosphorylation of histone H3 attenuate or prevent histone H3 methylation. The polypeptide is Histone-lysine N-methyltransferase PRDM9 (Rattus norvegicus (Rat)).